The sequence spans 278 residues: Putative ABC transporter ATP-binding protein MTBMA_c05830 (278 aa).

The region spanning 4 to 239 is the ABC transporter domain; sequence IEAVNIRYTY…IDTIRGADLR (236 aa). 37–44 contacts ATP; it reads GPNGAGKS.

This sequence belongs to the ABC transporter superfamily.

It is found in the cell membrane. Functionally, probably part of an ABC transporter complex. Responsible for energy coupling to the transport system. This chain is Putative ABC transporter ATP-binding protein MTBMA_c05830, found in Methanothermobacter marburgensis (strain ATCC BAA-927 / DSM 2133 / JCM 14651 / NBRC 100331 / OCM 82 / Marburg) (Methanobacterium thermoautotrophicum).